The following is a 419-amino-acid chain: MDKLKIEASEALAGNVVISGAKNAALPILMAGVLAETDFVVSNVPNLRDVKTSCELLRCLGAEVSRGDNSEVRISTTSLDHFCAPYDLVKTMRASILILGPLLARFGTADVSLPGGCAIGARPVNLHLHGLEQMGAKIEVEEGYIKARVDGRLKGAHIFMDMISVGATENLLMAATLADGETIIENAAREPEVIDLANCLIAMGAKIEGAGTDSIRIQGVESLKGCHYRVMPDRIETGSFLIAAAVTRGKIRCVDADPSTLEAVLAKLEDAGASITTGSDWIELDMQGKRPKAVNIKTVPYPGFPTDMQAQFCLLNVLAEGTSTITETIFENRFMHVPELIRMGANMELEGNTCIIQGIERLNGAQVMATDLRASASLVIAGLVADGTTIVDRIYHLDRGYEHIEDKFKGLGGHVERTQ.

Lysine 22–asparagine 23 contacts phosphoenolpyruvate. Arginine 93 serves as a coordination point for UDP-N-acetyl-alpha-D-glucosamine. Cysteine 117 acts as the Proton donor in catalysis. Cysteine 117 bears the 2-(S-cysteinyl)pyruvic acid O-phosphothioketal mark. Aspartate 307 and isoleucine 329 together coordinate UDP-N-acetyl-alpha-D-glucosamine.

It belongs to the EPSP synthase family. MurA subfamily.

The protein resides in the cytoplasm. The enzyme catalyses phosphoenolpyruvate + UDP-N-acetyl-alpha-D-glucosamine = UDP-N-acetyl-3-O-(1-carboxyvinyl)-alpha-D-glucosamine + phosphate. It participates in cell wall biogenesis; peptidoglycan biosynthesis. In terms of biological role, cell wall formation. Adds enolpyruvyl to UDP-N-acetylglucosamine. The protein is UDP-N-acetylglucosamine 1-carboxyvinyltransferase of Shewanella sediminis (strain HAW-EB3).